We begin with the raw amino-acid sequence, 388 residues long: Branched-chain-amino-acid aminotransferase 2, chloroplastic (388 aa).

A chloroplast-targeting transit peptide spans 1 to 22; that stretch reads MIKTITSLRKTLVLPLHLHIRT. An N6-(pyridoxal phosphate)lysine modification is found at Lys235.

This sequence belongs to the class-IV pyridoxal-phosphate-dependent aminotransferase family. Pyridoxal 5'-phosphate serves as cofactor.

It is found in the plastid. The protein resides in the chloroplast. It catalyses the reaction L-leucine + 2-oxoglutarate = 4-methyl-2-oxopentanoate + L-glutamate. The catalysed reaction is L-isoleucine + 2-oxoglutarate = (S)-3-methyl-2-oxopentanoate + L-glutamate. The enzyme catalyses L-valine + 2-oxoglutarate = 3-methyl-2-oxobutanoate + L-glutamate. It functions in the pathway amino-acid biosynthesis; L-isoleucine biosynthesis; L-isoleucine from 2-oxobutanoate: step 4/4. The protein operates within amino-acid biosynthesis; L-leucine biosynthesis; L-leucine from 3-methyl-2-oxobutanoate: step 4/4. It participates in amino-acid biosynthesis; L-valine biosynthesis; L-valine from pyruvate: step 4/4. Functionally, converts 2-oxo acids to branched-chain amino acids. Shows activity with L-Leu, L-Ile and L-Val as amino donors and 2-oxoglutarate as an amino acceptor, but no activity for D-isomers of Leu, Ile, Val, Asp, Glu or Ala. The sequence is that of Branched-chain-amino-acid aminotransferase 2, chloroplastic (BCAT2) from Arabidopsis thaliana (Mouse-ear cress).